The primary structure comprises 498 residues: MKKVSTLDLLFVAIMGVSPAAFAADLIDVSKLPSKAAQGAPGPVTLQAAVGAGGADELKAIRSTTLPNGKQVTRYEQFHNGVRVVGEAITEVKGPGKSVAAQRSGHFVANIAADLPGSTTAAVSAEQVLAQAKSLKAQGRKTENDKVELVIRLGENNIAQLVYNVSYLIPGEGLSRPHFVIDAKTGEVLDQWEGLAHAEAGGPGGNQKIGKYTYGSDYGPLIVNDRCEMDDGNVITVDMNSSTDDSKTTPFRFACPTNTYKQVNGAYSPLNDAHFFGGVVFKLYRDWFGTSPLTHKLYMKVHYGRSVENAYWDGTAMLFGDGATMFYPLVSLDVAAHEVSHGFTEQNSGLIYRGQSGGMNEAFSDMAGEAAEFYMRGKNDFLIGYDIKKGSGALRYMDQPSRDGRSIDNASQYYNGIDVHHSSGVYNRAFYLLANSPGWDTRKAFEVFVDANRYYWTATSNYNSGACGVIRSAQNRNYSAADVTRAFSTVGVTCPSAL.

An N-terminal signal peptide occupies residues 1-23; that stretch reads MKKVSTLDLLFVAIMGVSPAAFA. Positions 24 to 197 are excised as a propeptide; the sequence is ADLIDVSKLP…VLDQWEGLAH (174 aa). Cys-227 and Cys-255 are oxidised to a cystine. Asp-333 contacts Ca(2+). Residue His-337 participates in Zn(2+) binding. Glu-338 is a catalytic residue. Zn(2+) is bound by residues His-341 and Glu-361. Positions 369, 372, 380, and 382 each coordinate Ca(2+). Catalysis depends on His-420, which acts as the Proton donor. Cys-467 and Cys-494 are joined by a disulfide.

The protein belongs to the peptidase M4 family. In terms of assembly, monomer. Ca(2+) is required as a cofactor. Requires Zn(2+) as cofactor. In terms of processing, made as a membrane-associated pre-pro-protein, which is exported to the periplasm (yielding pro-elastase) with removal of the signal peptide. Under certain conditions pro-elastase can accumulate. The pro-peptide is removed in the periplasm yielding a (mature length) 33 kDa protein, probably by autocatalysis. The pro-peptide probably remains associated with elastase and can be secreted. Further alterations (perhaps processing) seems to be required before secretion into the extracellular space.

The protein resides in the secreted. It catalyses the reaction Hydrolysis of proteins including elastin, collagen types III and IV, fibronectin and immunoglobulin A, generally with bulky hydrophobic group at P1'. Insulin B chain cleavage pattern identical to that of thermolysin, but specificity differs in other respects.. With respect to regulation, inhibited by phosphoramidon. Functionally, cleaves host elastin, collagen, IgG, and several complement components as well as endogenous pro-aminopeptidase. Autocatalyses processing of its pro-peptide. Processes the pro-peptide of pro-chitin-binding protein (cbpD). Involved in the pathogenesis of P.aeruginosa infections. The chain is Elastase (lasB) from Pseudomonas aeruginosa (strain ATCC 15692 / DSM 22644 / CIP 104116 / JCM 14847 / LMG 12228 / 1C / PRS 101 / PAO1).